The primary structure comprises 499 residues: MAKEKIRVRYAPSPTGHLHIGNARTALFNYLFARHNKGTMVLRIEDSDQKRNVKGGSKSQMENLHWLGIDWDEGPDKGGDYGPYRQSERKDIYQKYIDQLLEEGKAYYSYKTEEELEEQREEQRAMGVAPHYTYEYEGMTADEIKQAQEEAKAKGLKPVVRIHIPEMETYSWDDIVKGHLEFESDTIGGDFVIQKRDGMPTYNFAVVVDDHLMKITHVLRGDDHVSNTPKQLVVYEALGWEPPKFGHMTLIINSETGKKLSKRDESVLQFIEQYRDLGYLPDAMFNFITLLGWSPKGENEIFTKREFIKQFDPARLSKSPAAFDQKKLEWINNQYIKKADRDTLLDLSLNNLQEAGLVDEHPTPEKMEWIRQLVNIYAVQMSYTKQIVDMAKIFFEDAKELSDEEIEEIKNDDGRAVIEEFKKQLDLIPRFTAVQIMGAIQATRKATGIKGRKLFMPVRIATTRSMVGPGIGEAMELLGKDRVVKHIDLTLKQMSDNNL.

The 'HIGH' region motif lies at 12-22; it reads PSPTGHLHIGN. The 'KMSKS' region motif lies at 259 to 263; sequence KLSKR. K262 provides a ligand contact to ATP.

It belongs to the class-I aminoacyl-tRNA synthetase family. Glutamate--tRNA ligase type 1 subfamily. Monomer.

The protein resides in the cytoplasm. The catalysed reaction is tRNA(Glu) + L-glutamate + ATP = L-glutamyl-tRNA(Glu) + AMP + diphosphate. Catalyzes the attachment of glutamate to tRNA(Glu) in a two-step reaction: glutamate is first activated by ATP to form Glu-AMP and then transferred to the acceptor end of tRNA(Glu). The sequence is that of Glutamate--tRNA ligase from Lactobacillus acidophilus (strain ATCC 700396 / NCK56 / N2 / NCFM).